The sequence spans 750 residues: Photosystem I P700 chlorophyll a apoprotein A1 (750 aa).

8 helical membrane-spanning segments follow: residues Val70–Ala93, Leu156–His179, Leu195–Leu219, Ile291–Tyr309, Trp346–Tyr369, Leu385–Val411, Ala433–His455, and Phe531–Leu549. 2 residues coordinate [4Fe-4S] cluster: Cys573 and Cys582. 2 helical membrane passes run His589 to Trp610 and Leu664 to Phe686. His675 lines the chlorophyll a' pocket. The chlorophyll a site is built by Met683 and Tyr691. A phylloquinone-binding site is contributed by Trp692. The helical transmembrane segment at Ala724 to Ala744 threads the bilayer.

Belongs to the PsaA/PsaB family. As to quaternary structure, the PsaA/B heterodimer binds the P700 chlorophyll special pair and subsequent electron acceptors. PSI consists of a core antenna complex that captures photons, and an electron transfer chain that converts photonic excitation into a charge separation. The eukaryotic PSI reaction center is composed of at least 11 subunits. P700 is a chlorophyll a/chlorophyll a' dimer, A0 is one or more chlorophyll a, A1 is one or both phylloquinones and FX is a shared 4Fe-4S iron-sulfur center. is required as a cofactor.

It is found in the plastid. It localises to the chloroplast thylakoid membrane. It carries out the reaction reduced [plastocyanin] + hnu + oxidized [2Fe-2S]-[ferredoxin] = oxidized [plastocyanin] + reduced [2Fe-2S]-[ferredoxin]. In terms of biological role, psaA and PsaB bind P700, the primary electron donor of photosystem I (PSI), as well as the electron acceptors A0, A1 and FX. PSI is a plastocyanin-ferredoxin oxidoreductase, converting photonic excitation into a charge separation, which transfers an electron from the donor P700 chlorophyll pair to the spectroscopically characterized acceptors A0, A1, FX, FA and FB in turn. Oxidized P700 is reduced on the lumenal side of the thylakoid membrane by plastocyanin. In Hordeum vulgare (Barley), this protein is Photosystem I P700 chlorophyll a apoprotein A1.